The sequence spans 182 residues: uncharacterized protein (182 aa).

A Macro domain is found at methionine 1 to leucine 170.

This is an uncharacterized protein from Sulfurisphaera tokodaii (strain DSM 16993 / JCM 10545 / NBRC 100140 / 7) (Sulfolobus tokodaii).